The sequence spans 480 residues: Na(+)/H(+) antiporter NhaA (480 aa).

11 helical membrane-spanning segments follow: residues Val34–Ala54, Leu76–Ile96, Ala113–Leu133, Gly144–Gly164, Phe174–Phe194, Arg197–Leu217, Gly223–Val243, Gly282–Leu302, Leu312–Leu332, Ile350–Leu370, and Glu381–Leu401. A disordered region spans residues Ala454–Ala480.

The protein belongs to the NhaA Na(+)/H(+) (TC 2.A.33) antiporter family.

The protein resides in the cell membrane. The enzyme catalyses Na(+)(in) + 2 H(+)(out) = Na(+)(out) + 2 H(+)(in). Na(+)/H(+) antiporter that extrudes sodium in exchange for external protons. This is Na(+)/H(+) antiporter NhaA from Streptomyces antibioticus.